The sequence spans 270 residues: ATP synthase subunit a (270 aa).

5 helical membrane passes run 37 to 57 (NVHIDSLFFSVFTGMLFLWVF), 98 to 118 (IAPLALTIFCWVILMNLMDLV), 143 to 163 (DVNITMAMALGVFALMIYYSI), 217 to 237 (VVFILIAAMLPWYLQWVGALP), and 239 to 259 (AIFHILVILIQAFVFMMLTIV).

This sequence belongs to the ATPase A chain family. As to quaternary structure, F-type ATPases have 2 components, CF(1) - the catalytic core - and CF(0) - the membrane proton channel. CF(1) has five subunits: alpha(3), beta(3), gamma(1), delta(1), epsilon(1). CF(0) has three main subunits: a(1), b(2) and c(9-12). The alpha and beta chains form an alternating ring which encloses part of the gamma chain. CF(1) is attached to CF(0) by a central stalk formed by the gamma and epsilon chains, while a peripheral stalk is formed by the delta and b chains.

It is found in the cell inner membrane. Functionally, key component of the proton channel; it plays a direct role in the translocation of protons across the membrane. This chain is ATP synthase subunit a, found in Aliivibrio fischeri (strain ATCC 700601 / ES114) (Vibrio fischeri).